The primary structure comprises 362 residues: RING-H2 finger protein ATL52 (362 aa).

Residues 58–78 (LIALIGILTSALILVSYYTLI) form a helical membrane-spanning segment. The segment at 142 to 184 (CSVCLSEFEENESLRLLPKCNHAFHLPCIDTWLKSHSNCPLCR) adopts an RING-type; atypical zinc-finger fold. Disordered stretches follow at residues 252 to 271 (DARS…DEDS) and 296 to 333 (EDEE…RSGG). Residues 309-319 (QRREEGEDGDG) show a composition bias toward basic and acidic residues.

Belongs to the RING-type zinc finger family. ATL subfamily. In terms of tissue distribution, expressed in flowers.

The protein localises to the membrane. It carries out the reaction S-ubiquitinyl-[E2 ubiquitin-conjugating enzyme]-L-cysteine + [acceptor protein]-L-lysine = [E2 ubiquitin-conjugating enzyme]-L-cysteine + N(6)-ubiquitinyl-[acceptor protein]-L-lysine.. Its pathway is protein modification; protein ubiquitination. The protein is RING-H2 finger protein ATL52 (ATL52) of Arabidopsis thaliana (Mouse-ear cress).